The sequence spans 264 residues: MRIALGIEYNGTDYFGWQRQREVASVQEKLEKALSKVANHPVEVQCAGRTDAGVHGTGQVVHFDTNVERKMVAWTMGANANLPKDIAVRWAKAVPDEFHARFSATARRYRYIIFNHALRPGILGSGVSHYHGELDEKKMHEAGQYLLGENDFTSFRAVQCQSLSPFRNMIHLNVTRHGHYVVIDIKANAFVHHMVRNITGSLIMVGRGEQDPEWIKWLLEAKDRKLAGPTAKAEGLYLVDVDYPEEFDLPRESIGPLFLPDNLN.

Aspartate 51 (nucleophile) is an active-site residue. A substrate-binding site is contributed by tyrosine 109.

Belongs to the tRNA pseudouridine synthase TruA family. In terms of assembly, homodimer.

It carries out the reaction uridine(38/39/40) in tRNA = pseudouridine(38/39/40) in tRNA. Its function is as follows. Formation of pseudouridine at positions 38, 39 and 40 in the anticodon stem and loop of transfer RNAs. This is tRNA pseudouridine synthase A from Vibrio vulnificus (strain CMCP6).